The sequence spans 39 residues: SPbeta prophage-derived membrane protein YosA (39 aa).

The helical transmembrane segment at 19–39 (SFVLIVVLFILLIIVGATFLY) threads the bilayer.

It belongs to the SscA family.

The protein resides in the membrane. This chain is SPbeta prophage-derived membrane protein YosA (yosA), found in Bacillus subtilis (strain 168).